Here is a 209-residue protein sequence, read N- to C-terminus: Imidazole glycerol phosphate synthase subunit HisH (209 aa).

A Glutamine amidotransferase type-1 domain is found at 1 to 205 (MIAIIDYGMG…KGVVETWKSS (205 aa)). The active-site Nucleophile is C79. Catalysis depends on residues H180 and E182.

In terms of assembly, heterodimer of HisH and HisF.

It is found in the cytoplasm. The enzyme catalyses 5-[(5-phospho-1-deoxy-D-ribulos-1-ylimino)methylamino]-1-(5-phospho-beta-D-ribosyl)imidazole-4-carboxamide + L-glutamine = D-erythro-1-(imidazol-4-yl)glycerol 3-phosphate + 5-amino-1-(5-phospho-beta-D-ribosyl)imidazole-4-carboxamide + L-glutamate + H(+). It carries out the reaction L-glutamine + H2O = L-glutamate + NH4(+). It participates in amino-acid biosynthesis; L-histidine biosynthesis; L-histidine from 5-phospho-alpha-D-ribose 1-diphosphate: step 5/9. In terms of biological role, IGPS catalyzes the conversion of PRFAR and glutamine to IGP, AICAR and glutamate. The HisH subunit catalyzes the hydrolysis of glutamine to glutamate and ammonia as part of the synthesis of IGP and AICAR. The resulting ammonia molecule is channeled to the active site of HisF. The sequence is that of Imidazole glycerol phosphate synthase subunit HisH from Bacillus thuringiensis subsp. konkukian (strain 97-27).